Reading from the N-terminus, the 346-residue chain is Autophagy-related protein 3 (346 aa).

The flexible region stretch occupies residues 85 to 161; that stretch reads DFAGDAGHEE…DDDDEAIIRA (77 aa). The active-site Glycyl thioester intermediate is the Cys-238. Residues 242 to 322 form a handle region region; the sequence is SVMKTLLDRA…DQEVAIRVDQ (81 aa).

The protein belongs to the ATG3 family. Monomer. Interacts with apg-6/atg8 through an intermediate thioester bond through the C-terminal Gly of apg-6/atg8. Also interacts with the 40 amino acid C-terminal region of the E1-like apg-5/atg7 enzyme. Also interacts with the atg12-apg-4/atg5 conjugate.

It is found in the cytoplasm. In terms of biological role, E2 conjugating enzyme required for the cytoplasm to vacuole transport (Cvt) and autophagy. Required for selective autophagic degradation of the nucleus (nucleophagy) as well as for mitophagy which contributes to regulate mitochondrial quantity and quality by eliminating the mitochondria to a basal level to fulfill cellular energy requirements and preventing excess ROS production. Responsible for the E2-like covalent binding of phosphatidylethanolamine to the C-terminal Gly of apg-6/atg8. The atg12-apg-4/atg5 conjugate plays a role of an E3 and promotes the transfer of apg-6/atg8 from apg-3/atg3 to phosphatidylethanolamine (PE). This step is required for the membrane association of apg-6/atg8. The formation of the apg-6/atg8-phosphatidylethanolamine conjugate is essential for autophagy and for the cytoplasm to vacuole transport (Cvt). The apg-6/atg8-PE conjugate mediates tethering between adjacent membranes and stimulates membrane hemifusion, leading to expansion of the autophagosomal membrane during autophagy. This Neurospora crassa (strain ATCC 24698 / 74-OR23-1A / CBS 708.71 / DSM 1257 / FGSC 987) protein is Autophagy-related protein 3 (apg-3).